A 98-amino-acid polypeptide reads, in one-letter code: NADH-ubiquinone oxidoreductase chain 4L (98 aa).

A run of 3 helical transmembrane segments spans residues Met-1 to Leu-21, Ser-29 to Leu-49, and Ile-61 to Val-81.

It belongs to the complex I subunit 4L family. Core subunit of respiratory chain NADH dehydrogenase (Complex I) which is composed of 45 different subunits.

It is found in the mitochondrion inner membrane. It carries out the reaction a ubiquinone + NADH + 5 H(+)(in) = a ubiquinol + NAD(+) + 4 H(+)(out). In terms of biological role, core subunit of the mitochondrial membrane respiratory chain NADH dehydrogenase (Complex I) which catalyzes electron transfer from NADH through the respiratory chain, using ubiquinone as an electron acceptor. Part of the enzyme membrane arm which is embedded in the lipid bilayer and involved in proton translocation. The sequence is that of NADH-ubiquinone oxidoreductase chain 4L (MT-ND4L) from Platyrrhinus dorsalis (Thomas's broad-nosed bat).